Consider the following 399-residue polypeptide: CCA-adding enzyme (399 aa).

2 residues coordinate ATP: glycine 28 and arginine 31. Residues glycine 28 and arginine 31 each contribute to the CTP site. Positions 41 and 43 each coordinate Mg(2+). The ATP site is built by arginine 112, aspartate 155, arginine 158, arginine 161, and arginine 164. Residues arginine 112, aspartate 155, arginine 158, arginine 161, and arginine 164 each contribute to the CTP site.

This sequence belongs to the tRNA nucleotidyltransferase/poly(A) polymerase family. Bacterial CCA-adding enzyme type 3 subfamily. Homodimer. It depends on Mg(2+) as a cofactor.

The enzyme catalyses a tRNA precursor + 2 CTP + ATP = a tRNA with a 3' CCA end + 3 diphosphate. It carries out the reaction a tRNA with a 3' CCA end + 2 CTP + ATP = a tRNA with a 3' CCACCA end + 3 diphosphate. In terms of biological role, catalyzes the addition and repair of the essential 3'-terminal CCA sequence in tRNAs without using a nucleic acid template. Adds these three nucleotides in the order of C, C, and A to the tRNA nucleotide-73, using CTP and ATP as substrates and producing inorganic pyrophosphate. tRNA 3'-terminal CCA addition is required both for tRNA processing and repair. Also involved in tRNA surveillance by mediating tandem CCA addition to generate a CCACCA at the 3' terminus of unstable tRNAs. While stable tRNAs receive only 3'-terminal CCA, unstable tRNAs are marked with CCACCA and rapidly degraded. The sequence is that of CCA-adding enzyme from Staphylococcus saprophyticus subsp. saprophyticus (strain ATCC 15305 / DSM 20229 / NCIMB 8711 / NCTC 7292 / S-41).